The sequence spans 467 residues: Tel2-interacting protein 2 (467 aa).

Residues 4-45 (YKELARRLHTLQSKNEKEALEKQIDFLDKLVVEVDSLVHEQD) adopt a coiled-coil conformation.

The protein belongs to the TTI2 family. In terms of assembly, component of the TTT complex composed of tel2, tti1 and tti2. Interacts with tel2 and ttiI1. Component of the ASTRA complex composed of at least rvb1, rvb2, tra1, tel2, tti1 and tti2.

The protein localises to the nucleus. Functionally, component of the tel2-tti1-tti2 (TTT) complex that stabilizes protein levels of the phosphatidylinositol 3-kinase-related protein kinase (PIKK) family proteins. The TTT complex is involved in the cellular resistance to DNA damage stresses, like ionizing radiation (IR), ultraviolet (UV) and mitomycin C (MMC). Component of the ASTRA complex involved in chromatin remodeling. This Schizosaccharomyces pombe (strain 972 / ATCC 24843) (Fission yeast) protein is Tel2-interacting protein 2.